Here is a 139-residue protein sequence, read N- to C-terminus: Peptide methionine sulfoxide reductase B5 (139 aa).

The residue at position 2 (Ala2) is an N-acetylalanine. Positions Glu12–Ala133 constitute a MsrB domain. Zn(2+) contacts are provided by Cys51, Cys54, Cys97, and Cys100. Cysteines 69 and 122 form a disulfide. Residue Cys122 is the Nucleophile of the active site.

The protein belongs to the MsrB Met sulfoxide reductase family. It depends on Zn(2+) as a cofactor.

It localises to the cytoplasm. The protein localises to the cytosol. It catalyses the reaction L-methionyl-[protein] + [thioredoxin]-disulfide + H2O = L-methionyl-(R)-S-oxide-[protein] + [thioredoxin]-dithiol. In terms of biological role, catalyzes the reduction of methionine sulfoxide (MetSO) to methionine in proteins. Plays a protective role against oxidative stress by restoring activity to proteins that have been inactivated by methionine oxidation. MSRB family specifically reduces the MetSO R-enantiomer. The protein is Peptide methionine sulfoxide reductase B5 (MSRB5) of Arabidopsis thaliana (Mouse-ear cress).